The following is a 41-amino-acid chain: uncharacterized protein (41 aa).

A helical transmembrane segment spans residues 10–32 (LIILAVPFMIKTSLKTNLIFFFL).

It localises to the cell inner membrane. This is an uncharacterized protein from Escherichia coli (strain K12).